We begin with the raw amino-acid sequence, 737 residues long: Protein OPG064 (737 aa).

Position 1 is an N-acetylmethionine; by host (methionine 1). Cysteines 496 and 535 form a disulfide.

It belongs to the orthopoxvirus OPG064 family. As to quaternary structure, interacts with host KLC2; this interaction promotes IEV trafficking by engaging the host kinesin-1 complex. Interacts with protein OPG056/F12. In terms of processing, N-acetylated on initiator methionine by host.

Its function is as follows. Plays a role in intracellular enveloped virus (IEV) transport to the cell surface on microtubules. Together with protein OPG056/F12, forms a complex that interacts with host KLC2 (kinesin light chain isoform 2) to engage the kinesin-1 complex and thereby promote IEV trafficking. The protein is Protein OPG064 (OPG064) of Bos taurus (Bovine).